Here is a 427-residue protein sequence, read N- to C-terminus: MTWFIDRRLNGKNKSAVNRQRFLRRYKAQIKQSISEAINKRSVTDIESGESVSIPTDDINEPMFHQGRGGLRNRVHPGNDHFVQNDRIERPQGGGGGGGSGQGQASADGEGKDEFVFQISKDEYLDLLFEDLALPNLKKNQHRQLNEFKTHRAGFTSNGVPANISVVRSLQNSLARRTAMTAGKRRELRALEEDLEAISRSEPVQLLEEERLRKEIAELRAKIERVPFIDTFDLRYKNYEKRPEPSSQAVMFCLMDVSGSMDQATKDMAKRFYILLYLFLSRTYKNVDVVYIRHHTQAKEVDEHEFFYSQETGGTIVSSALKLMDEVVQARYDPAQWNIYAAQASDGDNWADDSPLCHELLAKKILPVVRYYSYIEITRRAHQTLWREYEHLQATFDNFAMQHIRDQEDIYPVFRELFHKQSSKSEA.

Positions 72-109 are disordered; the sequence is RNRVHPGNDHFVQNDRIERPQGGGGGGGSGQGQASADG. Residues 77 to 90 show a composition bias toward basic and acidic residues; it reads PGNDHFVQNDRIER. The segment covering 92 to 102 has biased composition (gly residues); it reads QGGGGGGGSGQ.

It belongs to the UPF0229 family.

The chain is UPF0229 protein KPN78578_11640 from Klebsiella pneumoniae subsp. pneumoniae (strain ATCC 700721 / MGH 78578).